The primary structure comprises 423 residues: MKEIIARHKAGEHLGICSVRSAHPLVIESALLFDLNTDNKVLIEATSNQVNQFGGYTGMKPADFRDFVYGIAQEVGFPRERLILGGDHLGPNCWQNEPADTAMEKSVELIKAYVAAGFSKIHLDASMSCADDPTPLDPMVVAKRAALLCQAAETTATDEQKRHLTYVIGTEVPVPGGEASAINAVHVTREQDAARTLQTHQAAFRALGLDEALNRVIAIVVQPGVEFDHTQIIHYQPQAAQALSAWIKETPMVYEAHSTDYQTRQAYRALVRDHYAILKVGPALTFALREAIFALAQMENELISPEQRSRVLEVIDEVMLNEPGYWKKYYRPTWSQAMVDIHFSLSDRIRYYWPHPRIRQSVEKLIANLNNVTLPLGLISQFMPVQFERLSEGVLTPTPHNLIIDKIQDVLRAYRFGCTPDVA.

This sequence belongs to the GatZ/KbaZ family. GatZ subfamily. In terms of assembly, forms a complex with GatY.

It participates in carbohydrate metabolism; D-tagatose 6-phosphate degradation; D-glyceraldehyde 3-phosphate and glycerone phosphate from D-tagatose 6-phosphate: step 2/2. In terms of biological role, component of the tagatose-1,6-bisphosphate aldolase GatYZ that is required for full activity and stability of the Y subunit. Could have a chaperone-like function for the proper and stable folding of GatY. When expressed alone, GatZ does not show any aldolase activity. Is involved in the catabolism of galactitol. The chain is D-tagatose-1,6-bisphosphate aldolase subunit GatZ from Salmonella choleraesuis (strain SC-B67).